The primary structure comprises 260 residues: Dehydrogenase/reductase SDR family member 11 (260 aa).

The signal sequence occupies residues Met1 to Ala30. NADP(+) contacts are provided by residues Gly18–Ile23, Arg43–Thr44, Glu49, Asp70–Leu71, and Asn97. Ser151 and Tyr166 together coordinate substrate. NADP(+)-binding positions include Tyr166, Lys170, Val201–Gln204, and Lys208. Tyr166 (proton acceptor) is an active-site residue.

It belongs to the short-chain dehydrogenases/reductases (SDR) family. In terms of assembly, homotetramer. Isoform 1: Ubiquitously expressed, with highest levels in testis, small intestine, colon, kidney, brain and heart. Isoform 3: Expressed in brain, heart and skeletal muscle.

The protein resides in the secreted. The enzyme catalyses a 3beta-hydroxysteroid + NADP(+) = a 3-oxosteroid + NADPH + H(+). It catalyses the reaction 17beta-estradiol + NAD(+) = estrone + NADH + H(+). It carries out the reaction 17beta-estradiol + NADP(+) = estrone + NADPH + H(+). Its pathway is steroid biosynthesis; estrogen biosynthesis. With respect to regulation, inhibited by flavonoids including apigenin, luteolin, genistein, kaempferol and quercetin and also by carbenoxolone, zearalenone, glycyrrhetinic, curcumin and flufenamic acid. Functionally, catalyzes the conversion of the 17-keto group of estrone, 4- and 5-androstenes and 5-alpha-androstanes into their 17-beta-hydroxyl metabolites and the conversion of the 3-keto group of 3-, 3,17- and 3,20- diketosteroids into their 3-hydroxyl metabolites. Exhibits reductive 3-beta-hydroxysteroid dehydrogenase activity toward 5-beta-androstanes, 5-beta-pregnanes, 4-pregnenes and bile acids. May also reduce endogenous and exogenous alpha-dicarbonyl compounds and xenobiotic alicyclic ketones. This chain is Dehydrogenase/reductase SDR family member 11 (DHRS11), found in Homo sapiens (Human).